Consider the following 500-residue polypeptide: Aromatic-L-amino-acid decarboxylase (500 aa).

Pro102 lines the L-tryptophan pocket. Ser168 contacts pyridoxal 5'-phosphate. His203 contributes to the L-tryptophan binding site. Position 262 (Thr262) interacts with pyridoxal 5'-phosphate. L-tryptophan is bound at residue His318. Lys319 carries the N6-(pyridoxal phosphate)lysine modification. L-tryptophan is bound at residue Tyr348.

Belongs to the group II decarboxylase family. As to quaternary structure, homodimer. Pyridoxal 5'-phosphate serves as cofactor.

It catalyses the reaction L-tryptophan + H(+) = tryptamine + CO2. It carries out the reaction 5-hydroxy-L-tryptophan + H(+) = serotonin + CO2. Its function is as follows. Catalyzes the decarboxylation of L-tryptophan to tryptamine and L-5-hydroxytryptophan to serotonin, respectively. This is Aromatic-L-amino-acid decarboxylase from Catharanthus roseus (Madagascar periwinkle).